The primary structure comprises 671 residues: DNA ligase (671 aa).

NAD(+) contacts are provided by residues 37-41 (DIEYD), 86-87 (SL), and glutamate 117. The N6-AMP-lysine intermediate role is filled by lysine 119. Arginine 140, glutamate 177, lysine 295, and lysine 319 together coordinate NAD(+). 4 residues coordinate Zn(2+): cysteine 413, cysteine 416, cysteine 431, and cysteine 437. The BRCT domain occupies 594–671 (IISAAVFGKT…DEEEMLNLLK (78 aa)).

This sequence belongs to the NAD-dependent DNA ligase family. LigA subfamily. Mg(2+) serves as cofactor. It depends on Mn(2+) as a cofactor.

It catalyses the reaction NAD(+) + (deoxyribonucleotide)n-3'-hydroxyl + 5'-phospho-(deoxyribonucleotide)m = (deoxyribonucleotide)n+m + AMP + beta-nicotinamide D-nucleotide.. DNA ligase that catalyzes the formation of phosphodiester linkages between 5'-phosphoryl and 3'-hydroxyl groups in double-stranded DNA using NAD as a coenzyme and as the energy source for the reaction. It is essential for DNA replication and repair of damaged DNA. The polypeptide is DNA ligase (Polynucleobacter asymbioticus (strain DSM 18221 / CIP 109841 / QLW-P1DMWA-1) (Polynucleobacter necessarius subsp. asymbioticus)).